We begin with the raw amino-acid sequence, 415 residues long: UV excision repair protein RAD23 homolog B (415 aa).

One can recognise a Ubiquitin-like domain in the interval 1–79 (MQVTLKTLQQ…VVVMVTKPKA (79 aa)). The interval 80 to 175 (VTSAVPATTQ…STPGDSSRSN (96 aa)) is disordered. Positions 84-143 (VPATTQQSSSPSTTTVSSSPAAAVAQAPAPTPALAPTSTPASTTPASTTASSEPAPTGAT) are enriched in low complexity. Residue T155 is modified to Phosphothreonine. A phosphoserine mark is found at S160 and S174. T186 carries the post-translational modification Phosphothreonine. In terms of domain architecture, UBA 1 spans 188 to 228 (QSYENMVTEIMSMGYEREQVIAALRASFNNPDRAVEYLLMG). S199 carries the phosphoserine modification. The residue at position 202 (Y202) is a Phosphotyrosine. Residues 274 to 317 (HPLEFLRNQPQFQQMRQIIQQNPSLLPALLQQIGRENPQLLQQI) form the STI1 domain. Positions 334–355 (EAGGQGGGGGGGGGGGGGGGGI) are disordered. Positions 336 to 355 (GGQGGGGGGGGGGGGGGGGI) are enriched in gly residues. The region spanning 370 to 410 (PQEKEAIERLKALGFPEGLVIQAYFACEKNENLAANFLLQQ) is the UBA 2 domain.

The protein belongs to the RAD23 family. In terms of assembly, component of the XPC complex composed of XPC, RAD23B and CETN2. Interacts with NGLY1 and PSMC1. Interacts with ATXN3. Interacts with AMFR. Interacts with VCP; the interaction is indirect and mediated by NGLY1.

The protein resides in the nucleus. The protein localises to the cytoplasm. Multiubiquitin chain receptor involved in modulation of proteasomal degradation. Binds to polyubiquitin chains. Proposed to be capable to bind simultaneously to the 26S proteasome and to polyubiquitinated substrates and to deliver ubiquitinated proteins to the proteasome. May play a role in endoplasmic reticulum-associated degradation (ERAD) of misfolded glycoproteins by association with PNGase and delivering deglycosylated proteins to the proteasome. Functionally, involved in global genome nucleotide excision repair (GG-NER) by acting as component of the XPC complex. Cooperatively with Cetn2 appears to stabilize Xpc. May protect Xpc from proteasomal degradation. In terms of biological role, the XPC complex is proposed to represent the first factor bound at the sites of DNA damage and together with other core recognition factors, Xpa, RPA and the TFIIH complex, is part of the pre-incision (or initial recognition) complex. The XPC complex recognizes a wide spectrum of damaged DNA characterized by distortions of the DNA helix such as single-stranded loops, mismatched bubbles or single-stranded overhangs. The orientation of XPC complex binding appears to be crucial for inducing a productive NER. XPC complex is proposed to recognize and to interact with unpaired bases on the undamaged DNA strand which is followed by recruitment of the TFIIH complex and subsequent scanning for lesions in the opposite strand in a 5'-to-3' direction by the NER machinery. Cyclobutane pyrimidine dimers (CPDs) which are formed upon UV-induced DNA damage esacpe detection by the XPC complex due to a low degree of structural perurbation. Instead they are detected by the UV-DDB complex which in turn recruits and cooperates with the XPC complex in the respective DNA repair. In vitro, the XPC:RAD23B dimer is sufficient to initiate NER; it preferentially binds to cisplatin and UV-damaged double-stranded DNA and also binds to a variety of chemically and structurally diverse DNA adducts. XPC:RAD23B contacts DNA both 5' and 3' of a cisplatin lesion with a preference for the 5' side. Xpc:Rad22b induces a bend in DNA upon binding. Xpc:Rad23b stimulates the activity of DNA glycosylases Tdg and Smug1. This Rattus norvegicus (Rat) protein is UV excision repair protein RAD23 homolog B (Rad23b).